We begin with the raw amino-acid sequence, 803 residues long: Phosphoribosylformylglycinamidine synthase subunit PurL (803 aa).

The active site involves histidine 65. 2 residues coordinate ATP: tyrosine 68 and lysine 107. Glutamate 109 is a Mg(2+) binding site. Residues 110 to 113 (SHNH) and arginine 132 each bind substrate. The active-site Proton acceptor is the histidine 111. Aspartate 133 contributes to the Mg(2+) binding site. Glutamine 256 is a substrate binding site. Aspartate 284 is a Mg(2+) binding site. 328–330 (ESQ) lines the substrate pocket. ATP contacts are provided by asparagine 537 and glycine 574. Asparagine 575 provides a ligand contact to Mg(2+). A substrate-binding site is contributed by serine 577.

The protein belongs to the FGAMS family. As to quaternary structure, monomer. Part of the FGAM synthase complex composed of 1 PurL, 1 PurQ and 2 PurS subunits.

It localises to the cytoplasm. The enzyme catalyses N(2)-formyl-N(1)-(5-phospho-beta-D-ribosyl)glycinamide + L-glutamine + ATP + H2O = 2-formamido-N(1)-(5-O-phospho-beta-D-ribosyl)acetamidine + L-glutamate + ADP + phosphate + H(+). It functions in the pathway purine metabolism; IMP biosynthesis via de novo pathway; 5-amino-1-(5-phospho-D-ribosyl)imidazole from N(2)-formyl-N(1)-(5-phospho-D-ribosyl)glycinamide: step 1/2. In terms of biological role, part of the phosphoribosylformylglycinamidine synthase complex involved in the purines biosynthetic pathway. Catalyzes the ATP-dependent conversion of formylglycinamide ribonucleotide (FGAR) and glutamine to yield formylglycinamidine ribonucleotide (FGAM) and glutamate. The FGAM synthase complex is composed of three subunits. PurQ produces an ammonia molecule by converting glutamine to glutamate. PurL transfers the ammonia molecule to FGAR to form FGAM in an ATP-dependent manner. PurS interacts with PurQ and PurL and is thought to assist in the transfer of the ammonia molecule from PurQ to PurL. This Prochlorococcus marinus (strain NATL1A) protein is Phosphoribosylformylglycinamidine synthase subunit PurL.